Reading from the N-terminus, the 99-residue chain is Cytochrome c oxidase subunit 4 isoform 1, mitochondrial (99 aa).

At 1–73 (SVVKREDFSL…TFAEMNRGSN (73 aa)) the chain is on the mitochondrial matrix side. The residue at position 4 (Lys-4) is an N6-acetyllysine; alternate. Lys-4 bears the N6-succinyllysine; alternate mark. Lys-28 is subject to N6-acetyllysine. 2 positions are modified to phosphoserine: Ser-31 and Ser-33. Position 35 is an N6-acetyllysine; alternate (Lys-35). An N6-succinyllysine; alternate modification is found at Lys-35. Lys-42 bears the N6-acetyllysine mark. The helical transmembrane segment at 74 to 99 (EWKTVVGTATFFIGFTALIIMWQKRY) threads the bilayer.

This sequence belongs to the cytochrome c oxidase IV family. As to quaternary structure, component of the cytochrome c oxidase (complex IV, CIV), a multisubunit enzyme composed of 14 subunits. The complex is composed of a catalytic core of 3 subunits MT-CO1, MT-CO2 and MT-CO3, encoded in the mitochondrial DNA, and 11 supernumerary subunits COX4I, COX5A, COX5B, COX6A, COX6B, COX6C, COX7A, COX7B, COX7C, COX8 and NDUFA4, which are encoded in the nuclear genome. The complex exists as a monomer or a dimer and forms supercomplexes (SCs) in the inner mitochondrial membrane with NADH-ubiquinone oxidoreductase (complex I, CI) and ubiquinol-cytochrome c oxidoreductase (cytochrome b-c1 complex, complex III, CIII), resulting in different assemblies (supercomplex SCI(1)III(2)IV(1) and megacomplex MCI(2)III(2)IV(2)). Interacts with PHB2; the interaction decreases in absence of SPHK2. Interacts with AFG1L. Interacts with ABCB7; this interaction allows the regulation of cellular iron homeostasis and cellular reactive oxygen species (ROS) levels in cardiomyocytes. Interacts with FLVCR2; this interaction occurs in the absence of heme and is disrupted upon heme binding. Interacts with IRGC.

It localises to the mitochondrion inner membrane. Its pathway is energy metabolism; oxidative phosphorylation. Component of the cytochrome c oxidase, the last enzyme in the mitochondrial electron transport chain which drives oxidative phosphorylation. The respiratory chain contains 3 multisubunit complexes succinate dehydrogenase (complex II, CII), ubiquinol-cytochrome c oxidoreductase (cytochrome b-c1 complex, complex III, CIII) and cytochrome c oxidase (complex IV, CIV), that cooperate to transfer electrons derived from NADH and succinate to molecular oxygen, creating an electrochemical gradient over the inner membrane that drives transmembrane transport and the ATP synthase. Cytochrome c oxidase is the component of the respiratory chain that catalyzes the reduction of oxygen to water. Electrons originating from reduced cytochrome c in the intermembrane space (IMS) are transferred via the dinuclear copper A center (CU(A)) of subunit 2 and heme A of subunit 1 to the active site in subunit 1, a binuclear center (BNC) formed by heme A3 and copper B (CU(B)). The BNC reduces molecular oxygen to 2 water molecules using 4 electrons from cytochrome c in the IMS and 4 protons from the mitochondrial matrix. This Trachypithecus cristatus (Silvered leaf-monkey) protein is Cytochrome c oxidase subunit 4 isoform 1, mitochondrial (COX4I1).